Consider the following 1019-residue polypeptide: MDSTGRAYDGASEFKSVLVTEGTSHYTPVEVYNILDELKTIKITSTIAEQSVVSRTPIPLSKIGLQDVKKLFDINVIKCGSSLRIVDEPQVTFIVSYAKDIYDKFMCIEHDSAYEPSLTMHRVRVIYSMLNDYCAKMISEVPYESSFVGELPVKSVTLNKLGDRNMDALAEHLLFEHDVVNAQRENRIFYQRKSAPAVPVIFGDDLEPAVRERANLYHRYSVPYHQIELALHALANDLLSIQYCHPTVVYNYLSSRAPNFLRLDDQVSLKLTSAGIGTLMPRPVVQLLDYDLVYMSPLALNNLASRLLRKISLHLVMQMVTAVQQDLGEVVSVSSNVTNPASACLVRMNVQGVQTLAVFIAQSMLNPNISYGMISGLTLDCFSNFIYGACLMLFQALIPPSALTARQRLDINNRFAYFLIKCHATQATTARLVANQVIYPVDAIDQWQSNGRDVLVAIYNNLLPGELVLTNLIQTYFRGNTAQQAAEILIPADQTSYGANETRALSAPYLFGAPINMLAPDARLSTYKRDLALPDRSPILITTVEGQNSISIENLRHKTGLIRAMYLNGFVTQPPAWIRNANSNTALLSRFLDATPNLLGIYEAILANTYANAVNVYCDSVYRADIPIEWKLHQSVDPQDLLFGVFGIVPQYQILNEAVPDFFAGGEDILILQLIRAVYDTLSNKLGRNPADIFHLEEVFKVIEEIVSVLVQQKIDVRKYFTESMRSGSFSKPRWDNFLRRPVAQRLPNLYSVIMTQADHVYNYMTQLTHIIPITDCFYIVKNSGFVDRGSTGPVIASSSVYENVLKVVHTIADFDAANALRLQRRRVDNTSYTDSLSDMFNGLRSISSSEFVRSVNGRSVFTEGRIDAIKVNMRAKFDLQFITEEGGYSKPPNVKKLMFSDFLSFLDSHKSDYRPPLLTVPITIGLNNLGETNSNTLRMRSEAIDEYFSSYVGAQILVPINVVDTRVYTEFSELRNFFTGDVVIRDDPFDVWDGVKATYIPIGVHGVRLDPNGDQPPL.

It belongs to the phytoreovirus inner capsid protein P3 family. As to quaternary structure, homodimer. Homomultimer.

It localises to the virion. Its subcellular location is the host cytoplasm. Capsid protein which self-assembles to form the inner icosahedral capsid with a T=2 symmetry, and consisting of 60 P3 dimers. The chain is Outer capsid protein P3 from Alopecurus aequalis (Barnyard grass).